The sequence spans 314 residues: Electron transfer flavoprotein subunit alpha (314 aa).

253–281 serves as a coordination point for FAD; that stretch reads LYVAVGISGAIQHLAGMKDSKVIVAINKD.

It belongs to the ETF alpha-subunit/FixB family. In terms of assembly, heterodimer of an alpha and a beta subunit. FAD serves as cofactor.

In terms of biological role, the electron transfer flavoprotein serves as a specific electron acceptor for other dehydrogenases. It transfers the electrons to the main respiratory chain via ETF-ubiquinone oxidoreductase (ETF dehydrogenase). This chain is Electron transfer flavoprotein subunit alpha (etfA), found in Bradyrhizobium diazoefficiens (strain JCM 10833 / BCRC 13528 / IAM 13628 / NBRC 14792 / USDA 110).